We begin with the raw amino-acid sequence, 92 residues long: Defensin-like protein 294 (92 aa).

Residues 1-26 (MASRATSLFIFFFLISCTFMLLETNA) form the signal peptide. 3 disulfide bridges follow: cysteine 63–cysteine 82, cysteine 69–cysteine 87, and cysteine 75–cysteine 89.

The protein belongs to the DEFL family.

The protein resides in the secreted. The polypeptide is Defensin-like protein 294 (Arabidopsis thaliana (Mouse-ear cress)).